Reading from the N-terminus, the 165-residue chain is Glycine cleavage system H protein, mitochondrial (165 aa).

A mitochondrion-targeting transit peptide spans Met-1–Phe-31. The Lipoyl-binding domain occupies Val-55–Lys-137. Residue Lys-96 is modified to N6-lipoyllysine.

The protein belongs to the GcvH family. The glycine cleavage system is composed of four components that only loosely associate: the P protein (EC 1.4.4.2), the T protein (EC 2.1.2.10), the L protein (EC 1.8.1.4) and the lipoyl-bearing H protein. It depends on (R)-lipoate as a cofactor. Expressed in roots, stems and leaves.

Its subcellular location is the mitochondrion. The glycine cleavage system catalyzes the degradation of glycine. The H protein shuttles the methylamine group of glycine from the P protein to the T protein. This is Glycine cleavage system H protein, mitochondrial (GDCSH) from Flaveria trinervia (Clustered yellowtops).